The following is a 66-amino-acid chain: Large ribosomal subunit protein bL35 (66 aa).

Residues 1–16 (MPKQKTHRASAKRFKR) show a composition bias toward basic residues. A disordered region spans residues 1–20 (MPKQKTHRASAKRFKRTGNG).

This sequence belongs to the bacterial ribosomal protein bL35 family.

The protein is Large ribosomal subunit protein bL35 of Lactococcus lactis subsp. lactis (strain IL1403) (Streptococcus lactis).